A 295-amino-acid polypeptide reads, in one-letter code: Glucose-1-phosphate thymidylyltransferase (295 aa).

Residues Asp-111 and Asp-226 each contribute to the Mg(2+) site.

This sequence belongs to the glucose-1-phosphate thymidylyltransferase family. Homotetramer. Requires Mg(2+) as cofactor.

The catalysed reaction is dTTP + alpha-D-glucose 1-phosphate + H(+) = dTDP-alpha-D-glucose + diphosphate. It functions in the pathway carbohydrate biosynthesis; dTDP-L-rhamnose biosynthesis. It participates in bacterial outer membrane biogenesis; LPS O-antigen biosynthesis. Catalyzes the formation of dTDP-glucose, from dTTP and glucose 1-phosphate, as well as its pyrophosphorolysis. The polypeptide is Glucose-1-phosphate thymidylyltransferase (rmlA) (Xanthomonas campestris pv. campestris (strain B100)).